Here is a 970-residue protein sequence, read N- to C-terminus: Sodium/calcium exchanger 1 (970 aa).

Positions 1 to 32 (MLQFSLSPTLSMGFHVIAMVALLFSHVDHISA) are cleaved as a signal peptide. Residues 33-71 (ETEMEGEGNETGECTGSYYCKKGVILPIWEPQDPSFGDK) are Extracellular-facing. A glycan (N-linked (GlcNAc...) asparagine) is linked at Asn41. The chain crosses the membrane as a helical span at residues 72–92 (IARATVYFVAMVYMFLGVSII). Residues 93 to 133 (ADRFMSSIEVITSQEKEITIKKPNGETTKTTVRIWNETVSN) lie on the Cytoplasmic side of the membrane. The chain crosses the membrane as a helical span at residues 134–154 (LTLMALGSSAPEILLSVIEVC). The Alpha-1 repeat unit spans residues 138–178 (ALGSSAPEILLSVIEVCGHNFTAGDLGPSTIVGSAAFNMFI). The Extracellular portion of the chain corresponds to 155-167 (GHNFTAGDLGPST). The N-linked (GlcNAc...) asparagine glycan is linked to Asn157. Residues 168–188 (IVGSAAFNMFIIIALCVYVVP) form a helical membrane-spanning segment. Topologically, residues 189–201 (DGETRKIKHLRVF) are cytoplasmic. Residues 202–222 (FVTAAWSIFAYTWLYIILSVS) form a helical membrane-spanning segment. The Extracellular segment spans residues 223-228 (SPGVVE). A helical transmembrane segment spans residues 229–249 (VWEGLLTFFFFPICVVFAWVA). Residues 250–797 (DRRLLFYKYV…FVPPTEYWNG (548 aa)) are Cytoplasmic-facing. Positions 251–270 (RRLLFYKYVYKRYRAGKQRG) are putative calmodulin-binding region. Ser282 and Ser389 each carry phosphoserine. 2 Calx-beta domains span residues 393-493 (VNTE…VHLS) and 524-624 (ATVT…LEIG). Ca(2+)-binding residues include Glu417, Asp453, Asp478, Asp479, Ile481, Glu483, Glu486, Asp530, Asp531, Asp532, Glu548, Asp584, Asp610, Glu611, Glu612, and Glu715. Residues 798 to 818 (WACFIVSILMIGLLTAFIGDL) traverse the membrane as a helical segment. Over 819–821 (ASH) the chain is Extracellular. The chain crosses the membrane as a helical span at residues 822–842 (FACTIALKDSVTAVVFVALGT). One copy of the Alpha-2 repeat lies at 839–875 (ALGTSVPDTFASKVAATQDQYADASIGNVTGSNAVNV). The Cytoplasmic portion of the chain corresponds to 843–871 (SVPDTFASKVAATQDQYADASIGNVTGSN). The helical transmembrane segment at 872 to 892 (AVNVFLGIGVAWSIAAIYHAA) threads the bilayer. At 893–903 (NGEQFKVSPGT) the chain is on the extracellular side. Residues 904–924 (LAFSVTLFTIFAFINVGVLLY) form a helical membrane-spanning segment. Over 925-941 (RRRPEIGGELGGPRTAK) the chain is Cytoplasmic. A helical transmembrane segment spans residues 942 to 962 (LLTSCLFVLLWLLYIFFSSLE). The Extracellular portion of the chain corresponds to 963-970 (AYCHIKGF).

This sequence belongs to the Ca(2+):cation antiporter (CaCA) (TC 2.A.19) family. SLC8 subfamily.

The protein localises to the cell membrane. The catalysed reaction is Ca(2+)(in) + 3 Na(+)(out) = Ca(2+)(out) + 3 Na(+)(in). Its activity is regulated as follows. Activated by micromolar levels of Ca(2+). In terms of biological role, mediates the exchange of one Ca(2+) ion against three to four Na(+) ions across the cell membrane, and thereby contributes to the regulation of cytoplasmic Ca(2+) levels and Ca(2+)-dependent cellular processes. Contributes to Ca(2+) transport during excitation-contraction coupling in muscle. In a first phase, voltage-gated channels mediate the rapid increase of cytoplasmic Ca(2+) levels due to release of Ca(2+) stores from the endoplasmic reticulum. SLC8A1 mediates the export of Ca(2+) from the cell during the next phase, so that cytoplasmic Ca(2+) levels rapidly return to baseline. Required for normal embryonic heart development and the onset of heart contractions. This chain is Sodium/calcium exchanger 1 (SLC8A1), found in Bos taurus (Bovine).